Here is a 554-residue protein sequence, read N- to C-terminus: 3-(3-hydroxy-phenyl)propionate/3-hydroxycinnamic acid hydroxylase (554 aa).

FAD is bound by residues 17–46 (QVAI…VVEK) and 285–295 (FRIDRVLLAGD).

Belongs to the PheA/TfdB FAD monooxygenase family. FAD is required as a cofactor.

The catalysed reaction is 3-(3-hydroxyphenyl)propanoate + NADH + O2 + H(+) = 3-(2,3-dihydroxyphenyl)propanoate + NAD(+) + H2O. It catalyses the reaction (2E)-3-(3-hydroxyphenyl)prop-2-enoate + NADH + O2 + H(+) = (2E)-3-(2,3-dihydroxyphenyl)prop-2-enoate + NAD(+) + H2O. It functions in the pathway aromatic compound metabolism; 3-phenylpropanoate degradation. Its function is as follows. Catalyzes the insertion of one atom of molecular oxygen into position 2 of the phenyl ring of 3-(3-hydroxyphenyl)propionate (3-HPP) and hydroxycinnamic acid (3HCI). This chain is 3-(3-hydroxy-phenyl)propionate/3-hydroxycinnamic acid hydroxylase, found in Shigella sonnei (strain Ss046).